The sequence spans 957 residues: Serine-aspartate repeat-containing protein C (957 aa).

Residues 1–50 form the signal peptide; sequence MNNKKTVTNRKGMIPNRLNKFSIRKYSVGTASILVGTTLIFGLSGHEAKA. A disordered region spans residues 51 to 166; the sequence is AEHTNGELNQ…TPKTTTIKPR (116 aa). A ligand binding A region region spans residues 51–495; that stretch reads AEHTNGELNQ…GSSTANGDQK (445 aa). Residues 56-71 are compositionally biased toward polar residues; it reads GELNQSKNETTAPSEN. Basic and acidic residues predominate over residues 72–83; the sequence is KTTEKVDSRQLK. The span at 84-114 shows a compositional bias: polar residues; the sequence is DNTQTATADQPKVTMSDSATVKETSSNMQSP. The segment covering 115-132 has biased composition (low complexity); that stretch reads QNATASQSTTQTSNVTTN. Residues 133–164 are compositionally biased toward polar residues; it reads DKSSTTYSNETDKSNLTQAKDVSATPKTTTIK. CNA-B domains are found at residues 496-606 and 607-717; these read KYNL…YKTP and KYSL…EEET. Residues 678–937 form a disordered region; the sequence is TQTGTNTTED…NNSNNGTLFG (260 aa). Composition is skewed to acidic residues over residues 685–695 and 712–896; these read TEDDKDADGGE and YYEE…DSDS. The short motif at 920-924 is the LPXTG sorting signal element; it reads LPETG. Over residues 922-937 the composition is skewed to low complexity; sequence ETGSENNNSNNGTLFG. Threonine 923 carries the post-translational modification Pentaglycyl murein peptidoglycan amidated threonine. The propeptide at 924–957 is removed by sortase; the sequence is GSENNNSNNGTLFGGLFAALGSLLLFGRRKKQNK.

Belongs to the serine-aspartate repeat-containing protein (SDr) family. As to quaternary structure, homodimerizes; via N2-Domain. Interacts with host NRXN1; this interaction mediates bacterial attachment to host cells.

It is found in the secreted. The protein resides in the cell wall. Functionally, cell surface-associated calcium-binding protein which plays an important role in adhesion and pathogenesis. Mediates interactions with components of the extracellular matrix such as host NRXN1 to promote bacterial adhesion. This is Serine-aspartate repeat-containing protein C (sdrC) from Staphylococcus aureus (strain MSSA476).